We begin with the raw amino-acid sequence, 336 residues long: Fimbrial adhesin PapGII (336 aa).

The signal sequence occupies residues 1 to 20 (MKKWFPALLFSLCVSGESSA). 2 disulfide bridges follow: cysteine 64–cysteine 138 and cysteine 217–cysteine 249. D-galactose is bound by residues glutamate 79 and 124–127 (GYKW).

Belongs to the adhesin PapG family.

The protein resides in the secreted. It is found in the fimbrium. Tip adhesin component of type P pili that plays a critical role in kidney infection through targeted interaction with the globoseries glycolipids containing the Gal-alpha(1-4)-Gal disaccharide present on uroepithelial cells. In turn, transcriptionally regulates host gene expression in kidney cells, leading to inflammatory pathway activation and renal tissue damage. Acts thereby as key determinant of invasive uropathogenic E.coli (UPEC), which cause pyelonephritis and urinary-source bacteremia. This chain is Fimbrial adhesin PapGII, found in Escherichia coli.